The chain runs to 99 residues: Aspartyl/glutamyl-tRNA(Asn/Gln) amidotransferase subunit C (99 aa).

Belongs to the GatC family. In terms of assembly, heterotrimer of A, B and C subunits.

The catalysed reaction is L-glutamyl-tRNA(Gln) + L-glutamine + ATP + H2O = L-glutaminyl-tRNA(Gln) + L-glutamate + ADP + phosphate + H(+). It carries out the reaction L-aspartyl-tRNA(Asn) + L-glutamine + ATP + H2O = L-asparaginyl-tRNA(Asn) + L-glutamate + ADP + phosphate + 2 H(+). Functionally, allows the formation of correctly charged Asn-tRNA(Asn) or Gln-tRNA(Gln) through the transamidation of misacylated Asp-tRNA(Asn) or Glu-tRNA(Gln) in organisms which lack either or both of asparaginyl-tRNA or glutaminyl-tRNA synthetases. The reaction takes place in the presence of glutamine and ATP through an activated phospho-Asp-tRNA(Asn) or phospho-Glu-tRNA(Gln). The polypeptide is Aspartyl/glutamyl-tRNA(Asn/Gln) amidotransferase subunit C (Polaromonas naphthalenivorans (strain CJ2)).